Consider the following 236-residue polypeptide: Regulatory protein cys-3 (236 aa).

Positions 26 to 89 are disordered; sequence TLGQLQPIQP…MSVPPTPGAR (64 aa). Positions 28–37 are enriched in polar residues; sequence GQLQPIQPNP. Residues 99-162 enclose the bZIP domain; sequence LAAEEDKRKR…KWLKGLVTEK (64 aa). The segment at 105-137 is basic motif; sequence KRKRNTAASARFRIKKKQREQALEKSAKEMSEK. Residues 141–155 form a leucine-zipper region; that stretch reads LEGRIQALETENKWL. Positions 189-236 are disordered; it reads AAAADKAEAAADKADAERAREESSFCVSTSSPSSDESVDTDNKKRRKD. Residues 193–211 are compositionally biased toward basic and acidic residues; it reads DKAEAAADKADAERAREES. Over residues 212–223 the composition is skewed to low complexity; sequence SFCVSTSSPSSD.

The protein belongs to the bZIP family. GCN4 subfamily. In terms of assembly, binds DNA as a dimer.

It is found in the nucleus. In terms of biological role, turns on the expression of structural genes which encode sulfur-catabolic enzymes. Binds to sequence elements upstream of these genes. The polypeptide is Regulatory protein cys-3 (cys-3) (Neurospora crassa (strain ATCC 24698 / 74-OR23-1A / CBS 708.71 / DSM 1257 / FGSC 987)).